A 26-amino-acid polypeptide reads, in one-letter code: Hainantoxin F1-31.97 (26 aa).

2 disulfides stabilise this stretch: C2–C16 and C9–C21.

It belongs to the neurotoxin 10 (Hwtx-1) family. 17 (Hntx-9) subfamily. In terms of tissue distribution, expressed by the venom gland.

It is found in the secreted. Functionally, ion channel inhibitor. In Cyriopagopus hainanus (Chinese bird spider), this protein is Hainantoxin F1-31.97.